Reading from the N-terminus, the 277-residue chain is Shikimate dehydrogenase (NADP(+)) (277 aa).

Shikimate is bound by residues 15 to 17 and threonine 62; that span reads SLS. Lysine 66 acts as the Proton acceptor in catalysis. 2 residues coordinate shikimate: asparagine 87 and aspartate 102. NADP(+) contacts are provided by residues 127–131, 151–156, and isoleucine 219; these read GAGGA and NRTVDK. Tyrosine 221 is a shikimate binding site. Glycine 242 contributes to the NADP(+) binding site.

Belongs to the shikimate dehydrogenase family. As to quaternary structure, homodimer.

It carries out the reaction shikimate + NADP(+) = 3-dehydroshikimate + NADPH + H(+). It participates in metabolic intermediate biosynthesis; chorismate biosynthesis; chorismate from D-erythrose 4-phosphate and phosphoenolpyruvate: step 4/7. Functionally, involved in the biosynthesis of the chorismate, which leads to the biosynthesis of aromatic amino acids. Catalyzes the reversible NADPH linked reduction of 3-dehydroshikimate (DHSA) to yield shikimate (SA). The sequence is that of Shikimate dehydrogenase (NADP(+)) from Bacillus cereus (strain 03BB102).